The sequence spans 292 residues: MNYKEWLAQAIADLAKKNPTENSKIDALVLLQHATGKSRTQILAFDDTEIDEKVRLKLTALLDRRLKGEPIAYILGEKEFWSLPLNVSKGTLIPRPDTEILVEKALQIALEKLEENPPHFRILDLGTGTGAIALALASELAPICQKRHIPLEIIGVDLMSDVVALAQSNAERNQLNVEFLQSRWFDNITGKFDLIVSNPPYIDAQDEHLHQGDVRFEPLSALVANDEGYADLRHIIELASSYLNSNGVLLLEHGWQQGEKVRSIFQENHWEMVETVRDYSDNERVTLGFWKK.

S-adenosyl-L-methionine-binding positions include 126–130 (GTGTG), D157, W184, and N198. 198–201 (NPPY) serves as a coordination point for substrate.

The protein belongs to the protein N5-glutamine methyltransferase family. PrmC subfamily.

The enzyme catalyses L-glutaminyl-[peptide chain release factor] + S-adenosyl-L-methionine = N(5)-methyl-L-glutaminyl-[peptide chain release factor] + S-adenosyl-L-homocysteine + H(+). Its function is as follows. Methylates the class 1 translation termination release factors RF1/PrfA and RF2/PrfB on the glutamine residue of the universally conserved GGQ motif. This is Release factor glutamine methyltransferase from Haemophilus influenzae (strain ATCC 51907 / DSM 11121 / KW20 / Rd).